Here is a 198-residue protein sequence, read N- to C-terminus: MKQPSALSALVEALRALPGVGPKSAQRMAYHLMQHDREGAEKLGRSLLFATEHLQHCEKCNTFTEAQICEVCSDTERDPTLLCVVETPADQIMLEQTMTWRGLYFVLMGRLSPLDGIGPKEIHFDRLVKRATDGVVKEVVLATNFTNEGEATAHYLGQTLKSRGLSVTRLARGVPVGGELEYVDAGTIARAMLDRRSI.

The segment at 57–72 adopts a C4-type zinc-finger fold; it reads CEKCNTFTEAQICEVC. The Toprim domain maps to 80–175; sequence TLLCVVETPA…SVTRLARGVP (96 aa).

The protein belongs to the RecR family.

Its function is as follows. May play a role in DNA repair. It seems to be involved in an RecBC-independent recombinational process of DNA repair. It may act with RecF and RecO. The sequence is that of Recombination protein RecR from Paraburkholderia phymatum (strain DSM 17167 / CIP 108236 / LMG 21445 / STM815) (Burkholderia phymatum).